Here is a 388-residue protein sequence, read N- to C-terminus: Succinate--CoA ligase [ADP-forming] subunit beta (388 aa).

One can recognise an ATP-grasp domain in the interval 9–244; the sequence is KQLFAEYGLP…PSQDDPREAH (236 aa). Residues lysine 46, 53–55, glutamate 99, threonine 102, and glutamate 107 each bind ATP; that span reads GRG. Residues asparagine 199 and aspartate 213 each contribute to the Mg(2+) site. Substrate is bound by residues asparagine 264 and 321–323; that span reads GIV.

It belongs to the succinate/malate CoA ligase beta subunit family. As to quaternary structure, heterotetramer of two alpha and two beta subunits. Mg(2+) is required as a cofactor.

The enzyme catalyses succinate + ATP + CoA = succinyl-CoA + ADP + phosphate. The catalysed reaction is GTP + succinate + CoA = succinyl-CoA + GDP + phosphate. Its pathway is carbohydrate metabolism; tricarboxylic acid cycle; succinate from succinyl-CoA (ligase route): step 1/1. In terms of biological role, succinyl-CoA synthetase functions in the citric acid cycle (TCA), coupling the hydrolysis of succinyl-CoA to the synthesis of either ATP or GTP and thus represents the only step of substrate-level phosphorylation in the TCA. The beta subunit provides nucleotide specificity of the enzyme and binds the substrate succinate, while the binding sites for coenzyme A and phosphate are found in the alpha subunit. The chain is Succinate--CoA ligase [ADP-forming] subunit beta from Ectopseudomonas mendocina (strain ymp) (Pseudomonas mendocina).